The chain runs to 529 residues: GMP synthase [glutamine-hydrolyzing] (529 aa).

Positions R9–L211 constitute a Glutamine amidotransferase type-1 domain. Residue C86 is the Nucleophile of the active site. Active-site residues include H185 and E187. In terms of domain architecture, GMPS ATP-PPase spans W212–R404. S239–S245 provides a ligand contact to ATP.

Homodimer.

The catalysed reaction is XMP + L-glutamine + ATP + H2O = GMP + L-glutamate + AMP + diphosphate + 2 H(+). It participates in purine metabolism; GMP biosynthesis; GMP from XMP (L-Gln route): step 1/1. Functionally, catalyzes the synthesis of GMP from XMP. The sequence is that of GMP synthase [glutamine-hydrolyzing] from Aeromonas hydrophila subsp. hydrophila (strain ATCC 7966 / DSM 30187 / BCRC 13018 / CCUG 14551 / JCM 1027 / KCTC 2358 / NCIMB 9240 / NCTC 8049).